The sequence spans 338 residues: 1-aminocyclopropane-1-carboxylate deaminase (338 aa).

Residue Lys-51 is modified to N6-(pyridoxal phosphate)lysine. The active-site Nucleophile is the Ser-78.

It belongs to the ACC deaminase/D-cysteine desulfhydrase family. As to quaternary structure, homotrimer. It depends on pyridoxal 5'-phosphate as a cofactor.

The enzyme catalyses 1-aminocyclopropane-1-carboxylate + H2O = 2-oxobutanoate + NH4(+). Its function is as follows. Catalyzes a cyclopropane ring-opening reaction, the irreversible conversion of 1-aminocyclopropane-1-carboxylate (ACC) to ammonia and alpha-ketobutyrate. Allows growth on ACC as a nitrogen source. This chain is 1-aminocyclopropane-1-carboxylate deaminase, found in Pseudomonas fluorescens.